The sequence spans 354 residues: MTEATLTPPAVPRLTSLSHGGGCGCKIAPGVLSELLKRATPPALFPDLLVGTETSDDAAVYRLNDEQAIVATTDFFMPIVDDPFDFGRIAATNALSDVYAMGGKPILALALVGMPINVLPHETIAAILRGGESVCAEAGIPVAGGHSIDSVEPIYGLAAIGVVHPSRVKRNAAARAGDVLVLGKPLGVGVLSAALKKNQLDAAGYAQMVATTTKLNRPGAELAALPGVHALTDVTGFGLLGHTLELARGANLTARVHYASLPWLAGVEAFVADGVFTGASGRNWAAYGTDVRLADGLPPVAQALLTDPQTSGGLLVACAPEAVDDVLACFRADGFDRAAVIGEMVDGPSRVDVA.

Residue Cys23 is part of the active site. Residues Lys26 and 54-56 each bind ATP; that span reads TSD. Asp57 is a Mg(2+) binding site. Residues Asp74, Asp97, and 145-147 each bind ATP; that span reads GHS. Position 97 (Asp97) interacts with Mg(2+). Asp233 provides a ligand contact to Mg(2+).

This sequence belongs to the selenophosphate synthase 1 family. Class I subfamily. In terms of assembly, homodimer. The cofactor is Mg(2+).

The enzyme catalyses hydrogenselenide + ATP + H2O = selenophosphate + AMP + phosphate + 2 H(+). In terms of biological role, synthesizes selenophosphate from selenide and ATP. In Burkholderia ambifaria (strain MC40-6), this protein is Selenide, water dikinase.